Reading from the N-terminus, the 482-residue chain is Mannose-1-phosphate guanylyltransferase 2 (482 aa).

This sequence belongs to the mannose-6-phosphate isomerase type 2 family.

The catalysed reaction is alpha-D-mannose 1-phosphate + GTP + H(+) = GDP-alpha-D-mannose + diphosphate. The protein operates within nucleotide-sugar biosynthesis; GDP-alpha-D-mannose biosynthesis; GDP-alpha-D-mannose from alpha-D-mannose 1-phosphate (GTP route): step 1/1. Involved in GDP-mannose biosynthesis which serves as the activated sugar nucleotide precursor for mannose residues in cell surface polysaccharides. This enzyme participates in synthesis of the LPS O antigen. In Escherichia coli O157:H7, this protein is Mannose-1-phosphate guanylyltransferase 2 (manC2).